Consider the following 222-residue polypeptide: UPF0585 protein CG18661 (222 aa).

The protein belongs to the UPF0585 family.

This is UPF0585 protein CG18661 from Drosophila melanogaster (Fruit fly).